The following is a 178-amino-acid chain: PEST proteolytic signal-containing nuclear protein (178 aa).

Over residues 1-15 the composition is skewed to basic and acidic residues; sequence MADGKAGDEKPEKSQ. Residues 1–82 are disordered; the sequence is MADGKAGDEK…FAIGSQTTKK (82 aa). A2 is subject to N-acetylalanine. Over residues 37 to 47 the composition is skewed to low complexity; it reads SSSNGGESSSR. A Phosphoserine modification is found at S53. K64 carries the N6-acetyllysine modification. A phosphoserine mark is found at S77, S87, and S119. Residues 134 to 178 are disordered; the sequence is NIGRDTPTSAGPNSFNKGKHGFSDNQKLWERNIKSHLGNVHDQDN. T139 is subject to Phosphothreonine. Residues 139 to 149 show a composition bias toward polar residues; sequence TPTSAGPNSFN. Residue S147 is modified to Phosphoserine. 2 positions are modified to N6-acetyllysine: K150 and K152. The span at 160–178 shows a compositional bias: basic and acidic residues; sequence KLWERNIKSHLGNVHDQDN.

In terms of assembly, interacts with UHRF2/NIRF. Post-translationally, ubiquitinated; mediated by UHRF2 and leading to its subsequent proteasomal degradation. In terms of processing, N-terminally acetylated in a HYPK-dependent manner by the NatA acetyltransferase complex which is composed of NAA10 and NAA15.

The protein localises to the nucleus. Its function is as follows. May be involved in cell cycle regulation. The sequence is that of PEST proteolytic signal-containing nuclear protein (PCNP) from Homo sapiens (Human).